The chain runs to 710 residues: Protein Smaug homolog 1 (710 aa).

Disordered regions lie at residues 276 to 319 and 441 to 476; these read ARGS…FQDE and NQATESKDSASGGIQQHHIGNCESESGGVPLPESDL. The segment covering 309-318 has biased composition (polar residues); it reads QSTACNTFQD. Residues 319–379 enclose the SAM domain; that stretch reads EGSGMKDVPA…KIVISIQKLK (61 aa).

This sequence belongs to the SMAUG family.

It is found in the cytoplasm. Its subcellular location is the cell projection. It localises to the dendrite. The protein resides in the synapse. The protein localises to the synaptosome. Its function is as follows. Acts as a translational repressor. The protein is Protein Smaug homolog 1 (samd4a) of Xenopus laevis (African clawed frog).